The sequence spans 320 residues: Methionyl-tRNA formyltransferase (320 aa).

Residue 111–114 coordinates (6S)-5,6,7,8-tetrahydrofolate; the sequence is SLLP.

Belongs to the Fmt family.

The enzyme catalyses L-methionyl-tRNA(fMet) + (6R)-10-formyltetrahydrofolate = N-formyl-L-methionyl-tRNA(fMet) + (6S)-5,6,7,8-tetrahydrofolate + H(+). Its function is as follows. Attaches a formyl group to the free amino group of methionyl-tRNA(fMet). The formyl group appears to play a dual role in the initiator identity of N-formylmethionyl-tRNA by promoting its recognition by IF2 and preventing the misappropriation of this tRNA by the elongation apparatus. The polypeptide is Methionyl-tRNA formyltransferase (Bifidobacterium adolescentis (strain ATCC 15703 / DSM 20083 / NCTC 11814 / E194a)).